A 117-amino-acid polypeptide reads, in one-letter code: UPF0145 protein CV_4322 (117 aa).

This sequence belongs to the UPF0145 family.

This Chromobacterium violaceum (strain ATCC 12472 / DSM 30191 / JCM 1249 / CCUG 213 / NBRC 12614 / NCIMB 9131 / NCTC 9757 / MK) protein is UPF0145 protein CV_4322.